A 142-amino-acid chain; its full sequence is Putative pre-16S rRNA nuclease (142 aa).

It belongs to the YqgF nuclease family.

It localises to the cytoplasm. Could be a nuclease involved in processing of the 5'-end of pre-16S rRNA. The chain is Putative pre-16S rRNA nuclease from Ruminiclostridium cellulolyticum (strain ATCC 35319 / DSM 5812 / JCM 6584 / H10) (Clostridium cellulolyticum).